Consider the following 871-residue polypeptide: Alanine--tRNA ligase (871 aa).

His-590, His-594, Cys-694, and His-698 together coordinate Zn(2+).

Belongs to the class-II aminoacyl-tRNA synthetase family. Requires Zn(2+) as cofactor.

It localises to the cytoplasm. The enzyme catalyses tRNA(Ala) + L-alanine + ATP = L-alanyl-tRNA(Ala) + AMP + diphosphate. Catalyzes the attachment of alanine to tRNA(Ala) in a two-step reaction: alanine is first activated by ATP to form Ala-AMP and then transferred to the acceptor end of tRNA(Ala). Also edits incorrectly charged Ser-tRNA(Ala) and Gly-tRNA(Ala) via its editing domain. The chain is Alanine--tRNA ligase from Thermoplasma acidophilum (strain ATCC 25905 / DSM 1728 / JCM 9062 / NBRC 15155 / AMRC-C165).